The chain runs to 68 residues: MQVSVRDNNVEQALRALKKKLQREGVFREMKLKQHFEKPSVKRAREQAEAVRRARKLARKKAQREGAL.

It belongs to the bacterial ribosomal protein bS21 family.

This chain is Small ribosomal subunit protein bS21, found in Cereibacter sphaeroides (strain ATCC 17029 / ATH 2.4.9) (Rhodobacter sphaeroides).